Consider the following 185-residue polypeptide: Anaphase-promoting complex subunit 10 (185 aa).

Residue Thr-2 is modified to N-acetylthreonine. The DOC domain occupies 2–185; the sequence is TTPNKTPPGA…IDFMMYRSIR (184 aa). N6-acetyllysine is present on Lys-169.

Belongs to the APC10 family. The mammalian APC/C is composed at least of 14 distinct subunits ANAPC1, ANAPC2, CDC27/APC3, ANAPC4, ANAPC5, CDC16/APC6, ANAPC7, CDC23/APC8, ANAPC10, ANAPC11, CDC26/APC12, ANAPC13, ANAPC15 and ANAPC16 that assemble into a complex of at least 19 chains with a combined molecular mass of around 1.2 MDa; APC/C interacts with FZR1 and FBXO5. The C-terminus of APC10 binds to CDC27/APC3. Interacts with PIWIL1; interaction only takes place when PIWIL1 binds piRNA. Interacts with FBXO43; the interaction is direct.

The protein operates within protein modification; protein ubiquitination. Component of the anaphase promoting complex/cyclosome (APC/C), a cell cycle-regulated E3 ubiquitin ligase that controls progression through mitosis and the G1 phase of the cell cycle. The APC/C complex acts by mediating ubiquitination and subsequent degradation of target proteins: it mainly mediates the formation of 'Lys-11'-linked polyubiquitin chains and, to a lower extent, the formation of 'Lys-48'- and 'Lys-63'-linked polyubiquitin chains. The APC/C complex catalyzes assembly of branched 'Lys-11'-/'Lys-48'-linked branched ubiquitin chains on target proteins. The polypeptide is Anaphase-promoting complex subunit 10 (ANAPC10) (Bos taurus (Bovine)).